A 1210-amino-acid chain; its full sequence is MAAAAGAAAAAAAEGEAPAEMGALLLEKETRGATERVHGSLGDTPRSEETLPKATPDSLEPAGPSSPASVTVTVGDEGADTPVGATPLIGDESENLEGDGDLRGGRILLGHATKSFPSSPSKGGSCPSRAKMSMTGAGKSPPSVQSLAMRLLSMPGAQGAAAAGSEPPPATTSPEGQPKVHRARKTMSKPGNGQPPVPEKRPPEIQHFRMSDDVHSLGKVTSDLAKRRKLNSGGGLSEELGSARRSGEVTLTKGDPGSLEEWETVVGDDFSLYYDSYSVDERVDSDSKSEVEALTEQLSEEEEEEEEEEEEEEEEEEEEEEEEDEESGNQSDRSGSSGRRKAKKKWRKDSPWVKPSRKRRKREPPRAKEPRGVNGVGSSGPSEYMEVPLGSLELPSEGTLSPNHAGVSNDTSSLETERGFEELPLCSCRMEAPKIDRISERAGHKCMATESVDGELSGCNAAILKRETMRPSSRVALMVLCETHRARMVKHHCCPGCGYFCTAGTFLECHPDFRVAHRFHKACVSQLNGMVFCPHCGEDASEAQEVTIPRGDGVTPPAGTAAPAPPPLSQDVPGRADTSQPSARMRGHGEPRRPPCDPLADTIDSSGPSLTLPNGGCLSAVGLPLGPGREALEKALVIQESERRKKLRFHPRQLYLSVKQGELQKVILMLLDNLDPNFQSDQQSKRTPLHAAAQKGSVEICHVLLQAGANINAVDKQQRTPLMEAVVNNHLEVARYMVQRGGCVYSKEEDGSTCLHHAAKIGNLEMVSLLLSTGQVDVNAQDSGGWTPIIWAAEHKHIEVIRMLLTRGADVTLTDNEENICLHWASFTGSAAIAEVLLNARCDLHAVNYHGDTPLHIAARESYHDCVLLFLSRGANPELRNKEGDTAWDLTPERSDVWFALQLNRKLRLGVGNRAIRTEKIICRDVARGYENVPIPCVNGVDGEPCPEDYKYISENCETSTMNIDRNITHLQHCTCVDDCSSSNCLCGQLSIRCWYDKDGRLLQEFNKIEPPLIFECNQACSCWRNCKNRVVQSGIKVRLQLYRTAKMGWGVRALQTIPQGTFICEYVGELISDAEADVREDDSYLFDLDNKDGEVYCIDARYYGNISRFINHLCDPNIIPVRVFMLHQDLRFPRIAFFSSRDIRTGEELGFDYGDRFWDIKSKYFTCQCGSEKCKHSAEAIALEQSRLARLDPHPELLPELGSLPPVNT.

Positions methionine 1–alanine 23 are enriched in low complexity. Disordered stretches follow at residues methionine 1–tryptophan 262 and aspartate 280–glutamate 386. Alanine 2 is subject to N-acetylalanine. Positions leucine 26–histidine 38 are enriched in basic and acidic residues. Serine 40 is subject to Phosphoserine. Position 44 is a phosphothreonine (threonine 44). The residue at position 47 (serine 47) is a Phosphoserine. A compositionally biased stretch (low complexity) spans glycine 105–serine 128. Serine 140 is subject to Phosphoserine. A compositionally biased stretch (low complexity) spans proline 155–serine 165. Serine 173 bears the Phosphoserine mark. Lysine 185 carries the post-translational modification N6,N6,N6-trimethyllysine; by EHMT2; alternate. Position 185 is an N6,N6-dimethyllysine; by EHMT2; alternate (lysine 185). Residues proline 198–serine 216 show a composition bias toward basic and acidic residues. Glycyl lysine isopeptide (Lys-Gly) (interchain with G-Cter in SUMO2) cross-links involve residues lysine 219 and lysine 229. Phosphoserine occurs at positions 232, 242, and 246. Over residues aspartate 280 to valine 291 the composition is skewed to basic and acidic residues. A compositionally biased stretch (acidic residues) spans leucine 298–serine 327. Basic residues predominate over residues glycine 338–arginine 347. Serine 350, serine 412, and serine 413 each carry phosphoserine. Positions isoleucine 548–proline 608 are disordered. Threonine 555 carries the phosphothreonine modification. Phosphoserine is present on serine 569. Lysine 634 is covalently cross-linked (Glycyl lysine isopeptide (Lys-Gly) (interchain with G-Cter in SUMO2)). ANK repeat units follow at residues phenylalanine 649–phenylalanine 678, serine 684–alanine 713, glutamine 717–serine 746, aspartate 750–alanine 780, glycine 784–leucine 813, glutamate 817–alanine 846, and histidine 850–leucine 879. Positions glutamate 817 to asparagine 819 are histone H3K9me binding. In terms of domain architecture, Pre-SET spans glutamine 972–glycine 1035. Residues cysteine 974, cysteine 976, cysteine 980, cysteine 985, cysteine 987, cysteine 1017, cysteine 1021, cysteine 1023, and cysteine 1027 each contribute to the Zn(2+) site. The SET domain maps to valine 1038–glycine 1155. Residues methionine 1048–tryptophan 1050, tyrosine 1085, and asparagine 1112–histidine 1113 each bind S-adenosyl-L-methionine. An interaction with histone H3 region spans residues aspartate 1074 to aspartate 1093. Residue cysteine 1115 participates in Zn(2+) binding. The segment at tyrosine 1154 to arginine 1157 is interaction with histone H3. The Post-SET domain occupies lysine 1164–glutamate 1180. Zn(2+) is bound at residue cysteine 1168. Glutamine 1169 is a binding site for S-adenosyl-L-methionine. Zn(2+) contacts are provided by cysteine 1170 and cysteine 1175. Serine 1204 is subject to Phosphoserine. Position 1210 is a phosphothreonine (threonine 1210).

It belongs to the class V-like SAM-binding methyltransferase superfamily. Histone-lysine methyltransferase family. Suvar3-9 subfamily. In terms of assembly, heterodimer; heterodimerizes with EHMT1/GLP. Interacts with GFI1B and WIZ. Part of the E2F6.com-1 complex in G0 phase composed of E2F6, MGA, MAX, TFDP1, CBX3, BAT8, EHMT1, RING1, RNF2, MBLR, L3MBTL2 and YAF2. Part of a complex composed of TRIM28, HDAC1, HDAC2 and EHMT2. Interacts with UHRF1. Interacts with CDYL. Interacts with REST only in the presence of CDYL. Part of a complex containing at least CDYL, REST, WIZ, SETB1, EHMT1 and EHMT2. Interacts with PRDM9 and CDYL; interaction only takes place when PRDM9 is bound to hotspot DNA. Interacts with SMYD5. Post-translationally, methylated at Lys-185; automethylated. Expressed in all tissues examined, with high levels in fetal liver, thymus, lymph node, spleen and peripheral blood leukocytes and lower level in bone marrow.

The protein localises to the nucleus. Its subcellular location is the chromosome. The enzyme catalyses N(6)-methyl-L-lysyl(9)-[histone H3] + S-adenosyl-L-methionine = N(6),N(6)-dimethyl-L-lysyl(9)-[histone H3] + S-adenosyl-L-homocysteine + H(+). It carries out the reaction L-lysyl(9)-[histone H3] + S-adenosyl-L-methionine = N(6)-methyl-L-lysyl(9)-[histone H3] + S-adenosyl-L-homocysteine + H(+). In terms of biological role, histone methyltransferase that specifically mono- and dimethylates 'Lys-9' of histone H3 (H3K9me1 and H3K9me2, respectively) in euchromatin. H3K9me represents a specific tag for epigenetic transcriptional repression by recruiting HP1 proteins to methylated histones. Also mediates monomethylation of 'Lys-56' of histone H3 (H3K56me1) in G1 phase, leading to promote interaction between histone H3 and PCNA and regulating DNA replication. Also weakly methylates 'Lys-27' of histone H3 (H3K27me). Also required for DNA methylation, the histone methyltransferase activity is not required for DNA methylation, suggesting that these 2 activities function independently. Probably targeted to histone H3 by different DNA-binding proteins like E2F6, MGA, MAX and/or DP1. May also methylate histone H1. In addition to the histone methyltransferase activity, also methylates non-histone proteins: mediates dimethylation of 'Lys-373' of p53/TP53. Also methylates CDYL, WIZ, ACIN1, DNMT1, HDAC1, ERCC6, KLF12 and itself. The chain is Histone-lysine N-methyltransferase EHMT2 (EHMT2) from Homo sapiens (Human).